The chain runs to 284 residues: MINKVQILSVTPPGNLDAYIRIANLWPMLSIEEEKKLTKRLRYNGDLDAAKTLILSHLRFVIHISRNYSGYGLLQSDLIQEGNIGLMKAVRRFNPEIGVRLVSFAVHWIKSEIHEYVLRNWRIVKVATTKSQRKLFFNLRKTKKRLGWFNEEEIQIVARELGVSSRDVREMESRMSAQDVAFNPSPEEHCDSKTNSSIQYLQDKTSNFANGVEQDNWEEHAANKLSSALLRLDERSRHIIHARWLDKNKKNTLQNIANNYGISAERVRQLEKNAMKKLKLAIEA.

The sigma-70 factor domain-2 stretch occupies residues 53–122; sequence LILSHLRFVI…IHEYVLRNWR (70 aa). Positions 77–80 match the Interaction with polymerase core subunit RpoC motif; sequence DLIQ. The interval 228 to 280 is sigma-70 factor domain-4; that stretch reads ALLRLDERSRHIIHARWLDKNKKNTLQNIANNYGISAERVRQLEKNAMKKLKL. The H-T-H motif DNA-binding region spans 253 to 272; the sequence is LQNIANNYGISAERVRQLEK.

It belongs to the sigma-70 factor family. RpoH subfamily. Interacts with the RNA polymerase core enzyme.

It localises to the cytoplasm. In terms of biological role, sigma factors are initiation factors that promote the attachment of RNA polymerase to specific initiation sites and are then released. This sigma factor is involved in regulation of expression of heat shock genes. This is RNA polymerase sigma factor RpoH from Buchnera aphidicola subsp. Acyrthosiphon pisum (strain APS) (Acyrthosiphon pisum symbiotic bacterium).